Here is a 280-residue protein sequence, read N- to C-terminus: Pantothenate synthetase (280 aa).

30 to 37 (MGALHRGH) contacts ATP. His37 serves as the catalytic Proton donor. (R)-pantoate is bound at residue Gln61. Gln61 provides a ligand contact to beta-alanine. Residue 148–151 (GEKD) participates in ATP binding. A (R)-pantoate-binding site is contributed by Gln154. ATP contacts are provided by residues Val177 and 185 to 188 (LSSR).

Belongs to the pantothenate synthetase family. In terms of assembly, homodimer.

It is found in the cytoplasm. It catalyses the reaction (R)-pantoate + beta-alanine + ATP = (R)-pantothenate + AMP + diphosphate + H(+). Its pathway is cofactor biosynthesis; (R)-pantothenate biosynthesis; (R)-pantothenate from (R)-pantoate and beta-alanine: step 1/1. Catalyzes the condensation of pantoate with beta-alanine in an ATP-dependent reaction via a pantoyl-adenylate intermediate. The sequence is that of Pantothenate synthetase from Azobacteroides pseudotrichonymphae genomovar. CFP2.